The sequence spans 247 residues: MFLEKDQDNLDNLETQAKELHKDCKECKNCQKEETKTTNKDNQKEDETVKNQSNQSNQSNQTKQTNTKQQKHQPKENSHLQITKLQTQIKELQQQLTQQKKSFDEELLKNQAELINFKKRAQTQKANELKYASSNFITNLLMPLEQLEKVIDMPTQNELLQKYLLGFKLLQQQIKKVLQDEGVEEIEALNKPFDPALHHALETVCDPKKPDKTNLAVLQKGYLYKKRILRPTLVKVNEWSDKNDKNE.

The span at glutamine 31–valine 49 shows a compositional bias: basic and acidic residues. The tract at residues glutamine 31 to histidine 79 is disordered. The segment covering lysine 50–lysine 68 has biased composition (low complexity).

It belongs to the GrpE family. In terms of assembly, homodimer.

It is found in the cytoplasm. Its function is as follows. Participates actively in the response to hyperosmotic and heat shock by preventing the aggregation of stress-denatured proteins, in association with DnaK and GrpE. It is the nucleotide exchange factor for DnaK and may function as a thermosensor. Unfolded proteins bind initially to DnaJ; upon interaction with the DnaJ-bound protein, DnaK hydrolyzes its bound ATP, resulting in the formation of a stable complex. GrpE releases ADP from DnaK; ATP binding to DnaK triggers the release of the substrate protein, thus completing the reaction cycle. Several rounds of ATP-dependent interactions between DnaJ, DnaK and GrpE are required for fully efficient folding. The polypeptide is Protein GrpE (Onion yellows phytoplasma (strain OY-M)).